The chain runs to 154 residues: Nuclear cap-binding protein subunit 2-A (154 aa).

Residues Tyr-10, Tyr-33, 102 to 106 (RVDWD), 113 to 117 (RQYGR), and 123 to 124 (QV) contribute to the mRNA site. Positions 30–108 (STLYVGNLSF…RLIRVDWDAG (79 aa)) constitute an RRM domain.

The protein belongs to the RRM NCBP2 family. Component of the nuclear cap-binding complex (CBC), a heterodimer composed of Cbp80 and Cbp20 that interacts with m7GpppG-capped RNA. Interacts with Ars2.

The protein localises to the nucleus. Its function is as follows. Component of the cap-binding complex (CBC), which binds co-transcriptionally to the 5' cap of pre-mRNAs and is involved in various processes such as pre-mRNA splicing and RNA-mediated gene silencing (RNAi). The CBC complex is involved in miRNA-mediated RNA interference via its interaction with Ars2 and is required for primary microRNAs (miRNAs) processing. Also involved in innate immunity via the short interfering RNAs (siRNAs) processing machinery by restricting the viral RNA production. In the CBC complex, Cbp20 recognizes and binds capped RNAs (m7GpppG-capped RNA) but requires Cbp80 to stabilize the movement of its N-terminal loop and lock the CBC into a high affinity cap-binding state with the cap structure. The sequence is that of Nuclear cap-binding protein subunit 2-A (Cbp20-A) from Drosophila virilis (Fruit fly).